The primary structure comprises 868 residues: Protein translocase subunit SecA (868 aa).

ATP-binding positions include Gln87, 105–109, and Asp500; that span reads GEGKT. Residues Cys849, Cys851, Cys860, and His861 each contribute to the Zn(2+) site.

Belongs to the SecA family. Monomer and homodimer. Part of the essential Sec protein translocation apparatus which comprises SecA, SecYEG and auxiliary proteins SecDF-YajC and YidC. Requires Zn(2+) as cofactor.

It is found in the cell membrane. Its subcellular location is the cytoplasm. The enzyme catalyses ATP + H2O + cellular proteinSide 1 = ADP + phosphate + cellular proteinSide 2.. In terms of biological role, part of the Sec protein translocase complex. Interacts with the SecYEG preprotein conducting channel. Has a central role in coupling the hydrolysis of ATP to the transfer of proteins into and across the cell membrane, serving both as a receptor for the preprotein-SecB complex and as an ATP-driven molecular motor driving the stepwise translocation of polypeptide chains across the membrane. In Wolbachia pipientis wMel, this protein is Protein translocase subunit SecA.